A 61-amino-acid polypeptide reads, in one-letter code: Small ribosomal subunit protein uS14 (61 aa).

Zn(2+)-binding residues include C24, C27, C40, and C43.

Belongs to the universal ribosomal protein uS14 family. Zinc-binding uS14 subfamily. As to quaternary structure, part of the 30S ribosomal subunit. Contacts proteins S3 and S10. It depends on Zn(2+) as a cofactor.

Its function is as follows. Binds 16S rRNA, required for the assembly of 30S particles and may also be responsible for determining the conformation of the 16S rRNA at the A site. In Alkaliphilus oremlandii (strain OhILAs) (Clostridium oremlandii (strain OhILAs)), this protein is Small ribosomal subunit protein uS14.